The chain runs to 324 residues: Olfactory receptor 4K15 (324 aa).

The Extracellular portion of the chain corresponds to 1-25 (MNETNHSRVTEFVLLGLSSSRELQP). N2 and N5 each carry an N-linked (GlcNAc...) asparagine glycan. The chain crosses the membrane as a helical span at residues 26–49 (FLFLTFSLLYLAILLGNFLIILTV). The Cytoplasmic segment spans residues 50-57 (TSDSRLHT). A helical transmembrane segment spans residues 58–79 (PMYFLLANLSFIDVCVASFATP). The Extracellular segment spans residues 80 to 100 (KMIADFLVERKTISFDACLAQ). Cysteines 97 and 189 form a disulfide. A helical membrane pass occupies residues 101 to 120 (IFFVHLFTGSEMVLLVSMAY). Topologically, residues 121–139 (DRYVAICKPLHYMTVMSRR) are cytoplasmic. The helical transmembrane segment at 140 to 158 (VCVVLVLISWFVGFIHTTS) threads the bilayer. Residues 159–195 (QLAFTVNLPFCGPNKVDSFFCDLPLVTKLACIDTYVV) are Extracellular-facing. A helical membrane pass occupies residues 196 to 219 (SLLIVADSGFLSLSSFLLLVVSYT). The Cytoplasmic segment spans residues 220 to 235 (VILVTVRNRSSASMAK). The helical transmembrane segment at 236-258 (ARSTLTAHITVVTLFFGPCIFIY) threads the bilayer. The Extracellular segment spans residues 259–269 (VWPFSSYSVDK). A helical transmembrane segment spans residues 270–289 (VLAVFYTIFTLILNPVIYTL). At 290–324 (RNKEVKAAMSKLKSRYLKPSQVSVVIRNVLFLETK) the chain is on the cytoplasmic side.

It belongs to the G-protein coupled receptor 1 family.

It is found in the cell membrane. In terms of biological role, odorant receptor. The sequence is that of Olfactory receptor 4K15 (OR4K15) from Homo sapiens (Human).